The following is a 349-amino-acid chain: MATFGAPATANSNPNKSYEVTPSPADSISSLSFSPRADILVATSWDNQVRCWEISRSGASLASAPKASISHDQPVLCSAWKDDGTTVFSGGCDKQAKMWPLLSGGQPVTVAMHEGPIAAMAWIPGMNLLATGSWDKTLKYWDTRQQNPVHTQQLPDKCYTLSVKHPLMVVGTADRNLIVFNLQNPQTEFKRIQSPLKYQTRCVTAFPDQQGFLVGSIEGRVGVHHLDDSQQSKNFTFKCHRDGNDIYSVNSLNFHPVHGTFATAGSDGAFNFWDKDSKQRLKAMSRCNQPIPCSSFNHDGSIYAYAACYDWSKGAENHNPATAKSSIFLHLPQESEVKAKPRVGATGRK.

The segment at 1–21 (MATFGAPATANSNPNKSYEVT) is disordered. Position 2 is an N-acetylalanine (alanine 2). Polar residues predominate over residues 9–21 (TANSNPNKSYEVT). WD repeat units lie at residues 23–62 (SPAD…ASLA), 70–109 (SHDQ…QPVT), 112–151 (MHEG…PVHT), 153–190 (QLPD…TEFK), and 244–283 (NDIY…RLKA). The DWD box motif lies at 128-144 (LLATGSWDKTLKYWDTR).

Belongs to the WD repeat rae1 family. As to quaternary structure, part of the nuclear pore complex (NPC). The NPC has an eight-fold symmetrical structure comprising a central transport channel and two rings, the cytoplasmic and nuclear rings, to which eight filaments are attached. The cytoplasmic filaments have loose ends, while the nuclear filaments are joined in a distal ring, forming a nuclear basket. NPCs are highly dynamic in configuration and composition, and can be devided in 3 subcomplexes, the NUP62 subcomplex, the NUP107-160 subcomplex and the NUP93 subcomplex, containing approximately 30 different nucleoporin proteins. Interacts with DDB1A.

The protein resides in the nucleus envelope. Its subcellular location is the nucleus. It localises to the nuclear pore complex. This Arabidopsis thaliana (Mouse-ear cress) protein is Protein RAE1.